Here is a 318-residue protein sequence, read N- to C-terminus: MQVTFLGTSSGVPTRARNVSAVALRLPQRAELWLFDCGEGTQHQFLRSDLRLSQLRRVFVSHMHGDHVFGLPGLLASLGLSGNSNGVDLYGPDPLESYLQGVLRNSSTRIGYPLKVHRVRDAAEQNLIVFEDKDILVRCTPLTHRVPAYAYRVEQKPKPGHFNLERAQRLGIPPGPVYAALKRGEQVSLDDGRVVDGRDFCGPDRPGASIVFCTDTVFSEAAVALAAGADLLIHEATFAHSEAEMAYQKQHSTSTMAAQTAAEAGVGKLVLTHLSPRYAPGNPVTPNDLLREAQAIFSNTILAKDFLSFEVAPRCNSS.

The Zn(2+) site is built by His-62, His-64, Asp-66, His-67, His-144, Asp-215, and His-273. The active-site Proton acceptor is the Asp-66.

It belongs to the RNase Z family. As to quaternary structure, homodimer. Zn(2+) is required as a cofactor.

It carries out the reaction Endonucleolytic cleavage of RNA, removing extra 3' nucleotides from tRNA precursor, generating 3' termini of tRNAs. A 3'-hydroxy group is left at the tRNA terminus and a 5'-phosphoryl group is left at the trailer molecule.. Functionally, zinc phosphodiesterase, which displays some tRNA 3'-processing endonuclease activity. Probably involved in tRNA maturation, by removing a 3'-trailer from precursor tRNA. This Prochlorococcus marinus (strain MIT 9303) protein is Ribonuclease Z.